A 194-amino-acid polypeptide reads, in one-letter code: tRNA(Phe) 7-((3-amino-3-carboxypropyl)-4-demethylwyosine(37)-N(4))-methyltransferase 1 (194 aa).

It belongs to the TYW3 family.

The catalysed reaction is 4-demethyl-7-[(3S)-3-amino-3-carboxypropyl]wyosine(37) in tRNA(Phe) + S-adenosyl-L-methionine = 7-[(3S)-3-amino-3-carboxypropyl]wyosine(37) in tRNA(Phe) + S-adenosyl-L-homocysteine + H(+). Its function is as follows. S-adenosyl-L-methionine-dependent methyltransferase that acts as a component of the wyosine derivatives biosynthesis pathway. Probably methylates N-4 position of wybutosine-86 to produce wybutosine-72. The chain is tRNA(Phe) 7-((3-amino-3-carboxypropyl)-4-demethylwyosine(37)-N(4))-methyltransferase 1 from Pyrococcus abyssi (strain GE5 / Orsay).